Here is a 98-residue protein sequence, read N- to C-terminus: Aspartyl/glutamyl-tRNA(Asn/Gln) amidotransferase subunit C (98 aa).

It belongs to the GatC family. In terms of assembly, heterotrimer of A, B and C subunits.

The enzyme catalyses L-glutamyl-tRNA(Gln) + L-glutamine + ATP + H2O = L-glutaminyl-tRNA(Gln) + L-glutamate + ADP + phosphate + H(+). The catalysed reaction is L-aspartyl-tRNA(Asn) + L-glutamine + ATP + H2O = L-asparaginyl-tRNA(Asn) + L-glutamate + ADP + phosphate + 2 H(+). Functionally, allows the formation of correctly charged Asn-tRNA(Asn) or Gln-tRNA(Gln) through the transamidation of misacylated Asp-tRNA(Asn) or Glu-tRNA(Gln) in organisms which lack either or both of asparaginyl-tRNA or glutaminyl-tRNA synthetases. The reaction takes place in the presence of glutamine and ATP through an activated phospho-Asp-tRNA(Asn) or phospho-Glu-tRNA(Gln). The sequence is that of Aspartyl/glutamyl-tRNA(Asn/Gln) amidotransferase subunit C from Arthrobacter sp. (strain FB24).